We begin with the raw amino-acid sequence, 194 residues long: MAIREILEVPDPRLKTVSEPVQPDEFNDDLKQLVDDMFETMYAAPGIGLAAIQVGVPKRVLVIDLQEPDMDAEPEECGHDHGDGEGAHKHYPVKNDPRIFINPEIIDPNEELSTYQEGCLSVPEIYADVDRPKTCTVKYQDLTGKTHQEDLDGLLATCLQHEMDHLEGILFIDHLSRLKKQMALKKLKKMRQAA.

The segment at Asp-71 to Val-93 is disordered. Basic and acidic residues predominate over residues Glu-76–Val-93. Fe cation contacts are provided by Cys-119 and His-161. Glu-162 is an active-site residue. His-165 provides a ligand contact to Fe cation.

The protein belongs to the polypeptide deformylase family. Requires Fe(2+) as cofactor.

The catalysed reaction is N-terminal N-formyl-L-methionyl-[peptide] + H2O = N-terminal L-methionyl-[peptide] + formate. Its function is as follows. Removes the formyl group from the N-terminal Met of newly synthesized proteins. Requires at least a dipeptide for an efficient rate of reaction. N-terminal L-methionine is a prerequisite for activity but the enzyme has broad specificity at other positions. The sequence is that of Peptide deformylase from Erythrobacter litoralis (strain HTCC2594).